A 1464-amino-acid polypeptide reads, in one-letter code: MLLSPSLLLPLLLLLGAPRGCAEGVAAALTPERLLEWQDKGIFVIQSESLKKCIQAGKSVLTLENCKQANKHMLWKWVSNHGLFNIGGSGCLGLNFSAPEQPLSLYECDSTLVSLRWRCDRKMITGPLQYSVQVAHDNTVVASRKYFHKWISYGSGGGDICEYLHKDLHTIKGNAHGMPCMFPFQYNHQWHHECTREGREDDLLWCATTSRYERDEKWGFCPDPTSAEVGCDTIWEKDLNSHICYQFNLLSSLSWSEAHSSCQMQGGALLSITDETEENFIREHMSSKTVEVWMGLNQLDEHAGWQWSDGTPLNYLNWSPEVNFEPFVEDHCGTFSSFIPSAWRSRDCASTLPYVCKKYLNHIDHEIVEKDAWKYYATHCEPGWNPYNRNCYKLQKEEKTWHEALRSCQADNSALIDITSLAEVEFLVTLLGDENASETWIGLSSNKIPVSFEWSNDSSVIFTNWHTLEPQIFPNRSQLCVSAEQSEGHWKVKNCEETLFYVCKKAGHVLSDAESGCQEGWERHGGFCYKIDTVLRSFDQASSGYYCPPALVTITNRFEQAFITSLIGSVVKMKDSYFWIALQDQNDTGEYTWKPAGQKPEPVQYTHWNAHQPRYSGGCVAMRGRHPPGRWEVKHCRHFKAMSLCKQPVENQEKAEYEERWPFHPCYLDWESEPGLASCFKVFHSEKVLMKRTWREAEAFCEEFGAHLASFAHIEEENFVNELLYSKFNWTEERQFWIGFNKRNPLNAGSWEWSDRIPVVSSFLDNNYFGEDARNCAVYKANKTLLPLHCGSKREWICKIPRDVKPKIPFWYQYDVPWLFYQDAEYLFHTFASEWLNFEFVCSWLHSDLLTIHSAHEQEFIHSKIKALSKYGASWWIGLQEERANDEFRWRDGTPVIYQNWDTGRERPVNNQSQRCGFISSITGLWGSEECSVSMPSICKRKKVLLIEKKKDTPKQHGTCPKGWLYFNYKCLLLNIPKDPNSWKNWMHAQHFCAEEGGTLVAIESEVEQAFITMNLFGQTTNVWIGLQNDDYETWLNGKPVVYSNWSPFDIINIPSHNTTDVQKHIPLCALLSSNPNFHFTGKWYFEDCGKEGYGFVCEKMQDTSGHGVNTSDMYPMPNTLEYGNRTYKIINANMTWYAAIKTCLMHGTQLVSITDQYHQSFLTVVLNRLGYAHWIGLFTTDNGLNFDWSDGTKSSFTFWKDEESSLLGDCVFADTNGLWHSTACESFLQGAICHVPPETRQSEHPELCSETSIPWIKFKSNCYSFSTVLDRMSFEAAHEFCKKEGSNLLTIKDEAENAFLLEELFAFGSSVQMVWLNAQFDGNNETIKWFDGTPTDQSNWGIRKPDTDYFKPHHCVALRIPEGLQLSLCQEKKGFICKMEADIRTAEELPEKGPSHSIIPLAVVLTLIVIVAICTLSFCIYKHNGGFFRRLAGFRNPYYPATNFSTVHLEENILISDLEKSDQ.

A signal peptide spans 1-22; that stretch reads MLLSPSLLLPLLLLLGAPRGCA. The Extracellular segment spans residues 23 to 1398; sequence EGVAAALTPE…ELPEKGPSHS (1376 aa). A Ricin B-type lectin domain is found at 40-163; sequence KGIFVIQSES…GSGGGDICEY (124 aa). 17 disulfide bridges follow: C53–C66, C91–C108, C180–C206, C194–C221, C262–C356, C332–C348, C408–C503, C480–C495, C619–C636, C701–C798, C776–C790, C842–C939, C916–C931, C1069–C1089, C1211–C1225, C1282–C1378, and C1356–C1370. An N-linked (GlcNAc...) asparagine glycan is attached at N95. The region spanning 175–223 is the Fibronectin type-II domain; it reads AHGMPCMFPFQYNHQWHHECTREGREDDLLWCATTSRYERDEKWGFCPD. C-type lectin domains lie at 240-357, 387-504, 524-645, 675-799, 821-940, 967-1098, 1123-1234, and 1259-1379; these read NSHI…YVCK, YNRN…YVCK, HGGF…MSLC, GLAS…WICK, YQDA…SICK, FNYK…GFVC, YGNR…GAIC, and FKSN…FICK. The N-linked (GlcNAc...) asparagine glycan is linked to N456. Residues 1399–1419 form a helical membrane-spanning segment; the sequence is IIPLAVVLTLIVIVAICTLSF. Residues 1420 to 1464 lie on the Cytoplasmic side of the membrane; the sequence is CIYKHNGGFFRRLAGFRNPYYPATNFSTVHLEENILISDLEKSDQ. The Endocytosis signal signature appears at 1437 to 1443; sequence NPYYPAT.

In terms of assembly, interacts with sPLA2-IB/PLA2G1B; this interaction mediates intracellular signaling as well as clearance of extracellular sPLA2-IB/PLA2G1B via endocytotic pathway. Interacts with sPLA2-X/PLA2G10; this interaction mediates sPLA2-X/PLA2G10 clearance and inactivation. Post-translationally, the secretory phospholipase A2 receptor form may be produced by the action of metalloproteinases. It contains all extracellular domains and only lacks transmembrane and cytosolic regions. It is however unclear whether this form is produced by proteolytic cleavage as suggested by some experiments, or by alternative splicing.

The protein resides in the cell membrane. Its subcellular location is the secreted. In terms of biological role, receptor for secretory phospholipase A2 (sPLA2). Also able to bind to snake PA2-like toxins. Although its precise function remains unclear, binding of sPLA2 to its receptor participates in both positive and negative regulation of sPLA2 functions as well as clearance of sPLA2. Binding of sPLA2-IB/PLA2G1B induces various effects depending on the cell type, such as activation of the mitogen-activated protein kinase (MAPK) cascade to induce cell proliferation, the production of lipid mediators, selective release of arachidonic acid in bone marrow-derived mast cells. In neutrophils, binding of sPLA2-IB/PLA2G1B can activate p38 MAPK to stimulate elastase release and cell adhesion. May be involved in responses in pro-inflammatory cytokine productions during endotoxic shock. Also has endocytic properties and rapidly internalizes sPLA2 ligands, which is particularly important for the clearance of extracellular sPLA2s to protect their potent enzymatic activities. The soluble secretory phospholipase A2 receptor form is circulating and acts as a negative regulator of sPLA2 functions by blocking the biological functions of sPLA2-IB/PLA2G1B and sPLA2-X/PLA2G10. This is Secretory phospholipase A2 receptor (PLA2R1) from Pongo abelii (Sumatran orangutan).